A 139-amino-acid polypeptide reads, in one-letter code: ATP synthase epsilon chain (139 aa).

Positions 89-110 are disordered; that stretch reads EARAEQARAEAEARRREAQSER.

It belongs to the ATPase epsilon chain family. F-type ATPases have 2 components, CF(1) - the catalytic core - and CF(0) - the membrane proton channel. CF(1) has five subunits: alpha(3), beta(3), gamma(1), delta(1), epsilon(1). CF(0) has three main subunits: a, b and c.

The protein localises to the cell membrane. In terms of biological role, produces ATP from ADP in the presence of a proton gradient across the membrane. This Chloroflexus aurantiacus (strain ATCC 29366 / DSM 635 / J-10-fl) protein is ATP synthase epsilon chain.